A 124-amino-acid chain; its full sequence is Small ribosomal subunit protein eS6 (124 aa).

It belongs to the eukaryotic ribosomal protein eS6 family.

The polypeptide is Small ribosomal subunit protein eS6 (Methanococcus maripaludis (strain DSM 14266 / JCM 13030 / NBRC 101832 / S2 / LL)).